The sequence spans 272 residues: UPF0759 protein YecE (272 aa).

It belongs to the UPF0759 family.

This chain is UPF0759 protein YecE (yecE), found in Escherichia coli (strain K12).